The chain runs to 202 residues: Protein-methionine-sulfoxide reductase heme-binding subunit MsrQ (202 aa).

Transmembrane regions (helical) follow at residues 8–28, 42–62, 75–95, 110–130, 147–167, and 169–189; these read LAVF…AWIF, LGLG…LQKL, LGLW…VFIL, PYII…ITSN, LVYL…RADL, and EWTL…PSIA.

Belongs to the MsrQ family. Heterodimer of a catalytic subunit (MsrP) and a heme-binding subunit (MsrQ). The cofactor is FMN. Requires heme b as cofactor.

It localises to the cell inner membrane. Functionally, part of the MsrPQ system that repairs oxidized periplasmic proteins containing methionine sulfoxide residues (Met-O), using respiratory chain electrons. Thus protects these proteins from oxidative-stress damage caused by reactive species of oxygen and chlorine generated by the host defense mechanisms. MsrPQ is essential for the maintenance of envelope integrity under bleach stress, rescuing a wide series of structurally unrelated periplasmic proteins from methionine oxidation. MsrQ provides electrons for reduction to the reductase catalytic subunit MsrP, using the quinone pool of the respiratory chain. This is Protein-methionine-sulfoxide reductase heme-binding subunit MsrQ from Pseudomonas aeruginosa (strain UCBPP-PA14).